Reading from the N-terminus, the 295-residue chain is Protoheme IX farnesyltransferase (295 aa).

Transmembrane regions (helical) follow at residues 9 to 29 (ITKP…FFLA), 36 to 56 (FGVF…GCVF), 80 to 100 (LVSL…GVGL), 108 to 128 (LAAL…SLYL), 135 to 155 (GTLV…CAVS), 163 to 183 (LTLL…IAIF), 209 to 229 (IMLY…GGYA), 230 to 250 (GLNY…MAWK), and 265 to 285 (FVFS…DFQV).

This sequence belongs to the UbiA prenyltransferase family. Protoheme IX farnesyltransferase subfamily.

Its subcellular location is the cell inner membrane. The enzyme catalyses heme b + (2E,6E)-farnesyl diphosphate + H2O = Fe(II)-heme o + diphosphate. The protein operates within porphyrin-containing compound metabolism; heme O biosynthesis; heme O from protoheme: step 1/1. Functionally, converts heme B (protoheme IX) to heme O by substitution of the vinyl group on carbon 2 of heme B porphyrin ring with a hydroxyethyl farnesyl side group. The chain is Protoheme IX farnesyltransferase from Pseudomonas syringae pv. syringae (strain B728a).